The following is a 399-amino-acid chain: E3 ubiquitin-protein ligase APD4 (399 aa).

The next 2 helical transmembrane spans lie at 42–62 (FGII…GVYG) and 284–304 (LIAY…AIHF). An RING-type zinc finger spans residues 348-387 (CAICFDAPRDCCFLPCGHCVSCYQCGTKIKRTKGRCPICR).

Expressed in the shoot apical meristems (SAM), root tips and inflorescences.

The protein resides in the endomembrane system. The protein localises to the vacuole membrane. The enzyme catalyses S-ubiquitinyl-[E2 ubiquitin-conjugating enzyme]-L-cysteine + [acceptor protein]-L-lysine = [E2 ubiquitin-conjugating enzyme]-L-cysteine + N(6)-ubiquitinyl-[acceptor protein]-L-lysine.. The protein operates within protein modification; protein ubiquitination. In terms of biological role, involved in pollen mitosis II (PMII) regulation during male gametogenesis. This Arabidopsis thaliana (Mouse-ear cress) protein is E3 ubiquitin-protein ligase APD4.